A 416-amino-acid polypeptide reads, in one-letter code: N-acetyl-L-cysteine deacetylase (416 aa).

Zn(2+)-binding residues include cysteine 128, histidine 130, glutamate 164, histidine 188, and histidine 380.

This sequence belongs to the peptidase M20 family. Requires Zn(2+) as cofactor. It depends on Co(2+) as a cofactor.

The enzyme catalyses N-acetyl-L-cysteine + H2O = L-cysteine + acetate. It participates in amino-acid metabolism. In terms of biological role, involved in a cysteine salvage pathway from S-alkylcysteine. Catalyzes the last step in this pathway, i.e. the deacetylation of N-acetyl-L-cysteine. This pathway is likely important in the catabolism of alkylated cysteine generated by proteolysis of alkylated glutathione formed in the detoxification of a wide range of electrophiles. This is N-acetyl-L-cysteine deacetylase from Bacillus subtilis (strain 168).